The following is a 182-amino-acid chain: Isopentenyl-diphosphate Delta-isomerase (182 aa).

Residues histidine 25 and histidine 32 each contribute to the Mn(2+) site. One can recognise a Nudix hydrolase domain in the interval 30–164; the sequence is LLHLAFSSWL…PWAFSPWMVM (135 aa). The active site involves cysteine 67. Cysteine 67 lines the Mg(2+) pocket. Histidine 69 is a Mn(2+) binding site. Glutamate 87 contacts Mg(2+). Mn(2+) contacts are provided by glutamate 114 and glutamate 116. Residue glutamate 116 is part of the active site.

It belongs to the IPP isomerase type 1 family. In terms of assembly, homodimer. Mg(2+) serves as cofactor. Requires Mn(2+) as cofactor.

The protein resides in the cytoplasm. It catalyses the reaction isopentenyl diphosphate = dimethylallyl diphosphate. It participates in isoprenoid biosynthesis; dimethylallyl diphosphate biosynthesis; dimethylallyl diphosphate from isopentenyl diphosphate: step 1/1. Functionally, catalyzes the 1,3-allylic rearrangement of the homoallylic substrate isopentenyl (IPP) to its highly electrophilic allylic isomer, dimethylallyl diphosphate (DMAPP). This is Isopentenyl-diphosphate Delta-isomerase from Escherichia coli O6:H1 (strain CFT073 / ATCC 700928 / UPEC).